Here is a 477-residue protein sequence, read N- to C-terminus: Argininosuccinate lyase (477 aa).

It belongs to the lyase 1 family. Argininosuccinate lyase subfamily.

It localises to the cytoplasm. It catalyses the reaction 2-(N(omega)-L-arginino)succinate = fumarate + L-arginine. It functions in the pathway amino-acid biosynthesis; L-arginine biosynthesis; L-arginine from L-ornithine and carbamoyl phosphate: step 3/3. This Corynebacterium glutamicum (strain R) protein is Argininosuccinate lyase.